The chain runs to 100 residues: MSMMCGGISAPLDADEDIQKMCDNVKPHAEEKAGKKYDVFTAKTYTTQIVSGTNYFIKIHVGGDDHVHLRVYKKLPCHGGGLELSGMQHSKSLQDPIAYF.

The 83-residue stretch at 6–88 folds into the Cystatin domain; the sequence is GGISAPLDAD…GGGLELSGMQ (83 aa). Residues 48-52 carry the Secondary area of contact motif; sequence QIVSG.

Belongs to the cystatin family. As to expression, widely expressed. Highly expressed in liver and to a lesser extent in spleen, gill, brain, intestine, kidney, head kidney and blood. Lowest level in muscle.

It localises to the cytoplasm. In terms of biological role, thiol protease inhibitor. Has papain inhibitory activity in vitro. May be involved in immune responses against invading Gram-negative bacteria. This chain is Cystatin-B, found in Oplegnathus fasciatus (Barred knifejaw).